A 304-amino-acid polypeptide reads, in one-letter code: tRNA pseudouridine synthase B (304 aa).

Aspartate 48 serves as the catalytic Nucleophile.

This sequence belongs to the pseudouridine synthase TruB family. Type 1 subfamily.

The enzyme catalyses uridine(55) in tRNA = pseudouridine(55) in tRNA. Functionally, responsible for synthesis of pseudouridine from uracil-55 in the psi GC loop of transfer RNAs. The sequence is that of tRNA pseudouridine synthase B from Pseudomonas paraeruginosa (strain DSM 24068 / PA7) (Pseudomonas aeruginosa (strain PA7)).